A 294-amino-acid chain; its full sequence is Elongation factor Ts (294 aa).

Residues 81–84 form an involved in Mg(2+) ion dislocation from EF-Tu region; it reads TDFV.

Belongs to the EF-Ts family.

The protein resides in the cytoplasm. Functionally, associates with the EF-Tu.GDP complex and induces the exchange of GDP to GTP. It remains bound to the aminoacyl-tRNA.EF-Tu.GTP complex up to the GTP hydrolysis stage on the ribosome. This Hydrogenovibrio crunogenus (strain DSM 25203 / XCL-2) (Thiomicrospira crunogena) protein is Elongation factor Ts.